The sequence spans 824 residues: MAGTKKRANADDDFVLTLSDDENDTLNQLEEEGEGDDGALATGSKTKKRKRDDAAAAQQEKGKNKKVKKQEQQQQQAQQKKKKGKNAPVQEEEDEDEEEEEDQGEDDGALNSDFEFDVGGAANEVRDFDGWEVNGNEEGKGGDKKAVDIDDIISRRQAKKEAELIRKQKKKKQKQEEEFSELEDDDEEDGGMEVDFGDDELLAEDGFGMGVDGEEESEKSDAEDEEKEEGSDEEAEGSDEDEQMDEDDDDAASDDDSVATPVMHPDDIASDRDSDEESQVDAEEEEKRKAFFAPEEEKTSESAMADAKRSFQEFNLSRPILRGLAGVNFSNPTPIQRKTIPVALLGKDIVGSAVTGSGKTAAFVVPILERLLFRPRKVPTSRVAILMPTRELAVQCYNVATKLATYTDITFCQLVGGFSLREQENILKKRPDVIIATPGRFIDHMRNSASFTVDTLEILVLDEADRMLEDGFADELNEILTTIPKSRQTMLFSATMTDTVDKLIRVGLNRPVRLMVDAKKNTAVTLVQEFVRLRPGREDKRLGYLLYLCKEIYTGRVIVFFRQKKEAHRVRIIFGLLGLKAAELHGSMSQEQSVENFREGKAAFLLATDLASRGLDIKGVETVINYEAPQSHEIYLHRVGRTARAGRSGRACTIAAEPDRKVVKAAVKAGKSQGAKIASRVIEPAVADSWAAKAEELADEVEEVLSEEKLEKQLAQAEMQVTKGENLIKHEAEIKSRPKRTWFETERDKKAARKLGAAELNGPDAGMSKKEKQKLSNKDKKRLDDSRQRQEAGAGWKKGRATRESMKNGQLPKAKKDNKKKGKK.

The tract at residues 1-305 (MAGTKKRANA…EEKTSESAMA (305 aa)) is disordered. Composition is skewed to acidic residues over residues 11 to 37 (DDDF…EGDD) and 90 to 108 (QEEE…EDDG). Over residues 137–166 (EEGKGGDKKAVDIDDIISRRQAKKEAELIR) the composition is skewed to basic and acidic residues. Composition is skewed to acidic residues over residues 178–203 (EFSE…ELLA), 212–257 (DGEE…DDDS), and 273–284 (DSDEESQVDAEE). Positions 285–305 (EEKRKAFFAPEEEKTSESAMA) are enriched in basic and acidic residues. The short motif at 309 to 337 (RSFQEFNLSRPILRGLAGVNFSNPTPIQR) is the Q motif element. The region spanning 340 to 514 (IPVALLGKDI…RVGLNRPVRL (175 aa)) is the Helicase ATP-binding domain. 353-360 (AVTGSGKT) contacts ATP. Residues 462–465 (DEAD) carry the DEAD box motif. The 145-residue stretch at 541-685 (RLGYLLYLCK…KIASRVIEPA (145 aa)) folds into the Helicase C-terminal domain. Basic and acidic residues-rich tracts occupy residues 739–749 (KRTWFETERDK) and 767–790 (MSKK…RQRQ). The interval 739–824 (KRTWFETERD…KKDNKKKGKK (86 aa)) is disordered.

It belongs to the DEAD box helicase family. DDX27/DRS1 subfamily. Associates with pre-ribosomal particles.

The protein resides in the nucleus. Its subcellular location is the nucleolus. The enzyme catalyses ATP + H2O = ADP + phosphate + H(+). In terms of biological role, ATP-binding RNA helicase involved in ribosome assembly. This Aspergillus niger (strain ATCC MYA-4892 / CBS 513.88 / FGSC A1513) protein is ATP-dependent RNA helicase drs1 (drs1).